The chain runs to 25 residues: Antifungal protein 1 (25 aa).

The disordered stretch occupies residues 1–25 (QSERFEQQMQGQDFSHDERFLSQAA). The span at 14-25 (FSHDERFLSQAA) shows a compositional bias: basic and acidic residues.

This sequence belongs to the 2S seed storage albumins family. As to expression, expressed in seed (at protein level). Not detected in pulp, stems and leaves.

Has strong antifungal activity against T.harzianum, F.oxysporum and A.fumigatus with IC(50) values of 32 ug/ml, 34 ug/ml and 40 ug/ml, restectively. Lacks antifungal activity against R.solani, P.brasiliensis and C.albicans. This chain is Antifungal protein 1, found in Passiflora edulis (Passion fruit).